The following is a 332-amino-acid chain: CRISPR-associated endonuclease Cas1 3 (332 aa).

Glu-159, His-224, and Glu-239 together coordinate Mn(2+).

The protein belongs to the CRISPR-associated endonuclease Cas1 family. As to quaternary structure, homodimer, forms a heterotetramer with a Cas2 homodimer. Mg(2+) is required as a cofactor. It depends on Mn(2+) as a cofactor.

CRISPR (clustered regularly interspaced short palindromic repeat), is an adaptive immune system that provides protection against mobile genetic elements (viruses, transposable elements and conjugative plasmids). CRISPR clusters contain spacers, sequences complementary to antecedent mobile elements, and target invading nucleic acids. CRISPR clusters are transcribed and processed into CRISPR RNA (crRNA). Acts as a dsDNA endonuclease. Involved in the integration of spacer DNA into the CRISPR cassette. The sequence is that of CRISPR-associated endonuclease Cas1 3 from Thermus thermophilus (strain ATCC 27634 / DSM 579 / HB8).